The chain runs to 314 residues: D-alanine--D-alanine ligase (314 aa).

Residues 114–309 (KQLWRAHGLP…FDALVLRILD (196 aa)) form the ATP-grasp domain. 140 to 195 (IEALGLPLIVKPVHEGSTIGISIVETRDALIAAHAEASRFDSAIMAERFVQGEEYT) contributes to the ATP binding site. The Mg(2+) site is built by D263, E276, and N278.

This sequence belongs to the D-alanine--D-alanine ligase family. Mg(2+) is required as a cofactor. Requires Mn(2+) as cofactor.

The protein localises to the cytoplasm. It catalyses the reaction 2 D-alanine + ATP = D-alanyl-D-alanine + ADP + phosphate + H(+). It functions in the pathway cell wall biogenesis; peptidoglycan biosynthesis. In terms of biological role, cell wall formation. This is D-alanine--D-alanine ligase from Chromohalobacter salexigens (strain ATCC BAA-138 / DSM 3043 / CIP 106854 / NCIMB 13768 / 1H11).